The following is a 187-amino-acid chain: ATP synthase subunit b (187 aa).

Residues 4–24 form a helical membrane-spanning segment; the sequence is LALFALLMVPAILLASGHDSG.

This sequence belongs to the ATPase B chain family. As to quaternary structure, F-type ATPases have 2 components, F(1) - the catalytic core - and F(0) - the membrane proton channel. F(1) has five subunits: alpha(3), beta(3), gamma(1), delta(1), epsilon(1). F(0) has three main subunits: a(1), b(2) and c(10-14). The alpha and beta chains form an alternating ring which encloses part of the gamma chain. F(1) is attached to F(0) by a central stalk formed by the gamma and epsilon chains, while a peripheral stalk is formed by the delta and b chains.

It localises to the cell inner membrane. Functionally, f(1)F(0) ATP synthase produces ATP from ADP in the presence of a proton or sodium gradient. F-type ATPases consist of two structural domains, F(1) containing the extramembraneous catalytic core and F(0) containing the membrane proton channel, linked together by a central stalk and a peripheral stalk. During catalysis, ATP synthesis in the catalytic domain of F(1) is coupled via a rotary mechanism of the central stalk subunits to proton translocation. Its function is as follows. Component of the F(0) channel, it forms part of the peripheral stalk, linking F(1) to F(0). This Sulfurovum sp. (strain NBC37-1) protein is ATP synthase subunit b.